A 130-amino-acid polypeptide reads, in one-letter code: Small ribosomal subunit protein uS9 (130 aa).

The protein belongs to the universal ribosomal protein uS9 family.

The chain is Small ribosomal subunit protein uS9 from Neisseria gonorrhoeae (strain ATCC 700825 / FA 1090).